We begin with the raw amino-acid sequence, 386 residues long: Protein phosphatase methylesterase 1 (386 aa).

The tract at residues 1–38 (MSALEKSMHLGRLPSRPPLPGSGGSQSGAKMRMGPGRK) is disordered. Residue serine 15 is modified to Phosphoserine. At arginine 16 the chain carries Asymmetric dimethylarginine; alternate. Residue arginine 16 is modified to Omega-N-methylarginine; alternate. Catalysis depends on residues serine 156 and aspartate 181. A compositionally biased stretch (acidic residues) spans 255–265 (IEEEEEDEEGS). Residues 255-280 (IEEEEEDEEGSESVNKRKKEDDMETK) form a disordered region. The span at 268-280 (VNKRKKEDDMETK) shows a compositional bias: basic and acidic residues. Histidine 349 is a catalytic residue.

The protein belongs to the AB hydrolase superfamily. As to quaternary structure, binds PPP2CA and PPP2CB. Phosphorylated by SIK1 following increases in intracellular sodium, leading to dissociation from the protein phosphatase 2A (PP2A) complex and subsequent dephosphorylation of sodium/potassium-transporting ATPase ATP1A1. Ubiquitous. Highly expressed in testis and brain.

It catalyses the reaction [phosphatase 2A protein]-C-terminal L-leucine methyl ester + H2O = [phosphatase 2A protein]-C-terminal L-leucine + methanol + H(+). Demethylates proteins that have been reversibly carboxymethylated. Demethylates PPP2CB (in vitro) and PPP2CA. Binding to PPP2CA displaces the manganese ion and inactivates the enzyme. The protein is Protein phosphatase methylesterase 1 (Ppme1) of Mus musculus (Mouse).